The sequence spans 676 residues: tRNA uridine 5-carboxymethylaminomethyl modification enzyme MnmG (676 aa).

15 to 20 (GAGHAG) contributes to the FAD binding site. NAD(+) is bound at residue 316–330 (GPRYCPSIEDKIVRF).

This sequence belongs to the MnmG family. In terms of assembly, homodimer. Heterotetramer of two MnmE and two MnmG subunits. FAD serves as cofactor.

It localises to the cytoplasm. NAD-binding protein involved in the addition of a carboxymethylaminomethyl (cmnm) group at the wobble position (U34) of certain tRNAs, forming tRNA-cmnm(5)s(2)U34. The polypeptide is tRNA uridine 5-carboxymethylaminomethyl modification enzyme MnmG (Roseiflexus castenholzii (strain DSM 13941 / HLO8)).